The following is a 159-amino-acid chain: NADH-quinone oxidoreductase subunit B (159 aa).

Positions 32, 33, 97, and 126 each coordinate [4Fe-4S] cluster.

Belongs to the complex I 20 kDa subunit family. NDH-1 is composed of 14 different subunits. Subunits NuoB, C, D, E, F, and G constitute the peripheral sector of the complex. [4Fe-4S] cluster serves as cofactor.

It localises to the cell inner membrane. The catalysed reaction is a quinone + NADH + 5 H(+)(in) = a quinol + NAD(+) + 4 H(+)(out). Its function is as follows. NDH-1 shuttles electrons from NADH, via FMN and iron-sulfur (Fe-S) centers, to quinones in the respiratory chain. The immediate electron acceptor for the enzyme in this species is believed to be ubiquinone. Couples the redox reaction to proton translocation (for every two electrons transferred, four hydrogen ions are translocated across the cytoplasmic membrane), and thus conserves the redox energy in a proton gradient. The polypeptide is NADH-quinone oxidoreductase subunit B (Helicobacter pylori (strain J99 / ATCC 700824) (Campylobacter pylori J99)).